The primary structure comprises 980 residues: LRR receptor-like serine/threonine-protein kinase SIK1 (980 aa).

The signal sequence occupies residues 1–24 (MAAARAPWLWWWVVVVVGVAVAEA). The Extracellular segment spans residues 25 to 588 (ASGGGGGGDG…HGQRVNISKT (564 aa)). N-linked (GlcNAc...) asparagine glycosylation is found at Asn72 and Asn81. 20 LRR repeats span residues 75-98 (FAVL…IGEL), 99-122 (KNLQ…IGDC), 124-146 (SLKY…ISKL), 147-170 (KQLE…LSQI), 171-194 (PNLK…IYWN), 196-218 (VLQY…MCQL), 219-242 (TGLW…IGNC), 243-265 (TSFE…NIGF), 266-289 (LQVA…IGLM), 290-312 (QALA…ILGN), 314-337 (SYTG…LGNM), 338-361 (SKLS…LGKL), 362-385 (EELF…ISSC), 387-408 (ALNK…GFQK), 409-433 (LESL…LGHI), 435-457 (NLDT…IGDL), 458-480 (EHLL…EFGN), 481-505 (LRSV…LGQL), 507-529 (NLDS…LANC), and 531-554 (SLNN…NFSK). Residues Asn230 and Asn241 are each glycosylated (N-linked (GlcNAc...) asparagine). 2 N-linked (GlcNAc...) asparagine glycosylation sites follow: Asn312 and Asn336. N-linked (GlcNAc...) asparagine glycosylation is found at Asn381, Asn399, and Asn416. Residues Asn464 and Asn493 are each glycosylated (N-linked (GlcNAc...) asparagine). Asn536, Asn541, Asn551, and Asn584 each carry an N-linked (GlcNAc...) asparagine glycan. A helical transmembrane segment spans residues 589–609 (AIACIILGFIILLCVLLLAIY). Residues 610–980 (KTNQPQPLVK…FGEVISKHTM (371 aa)) are Cytoplasmic-facing. The Protein kinase domain occupies 653–923 (LSEKYIIGYG…EVARVLLSLL (271 aa)). ATP-binding positions include 659–667 (IGYGASSTV) and Lys681. The Proton acceptor role is filled by Asp778.

The protein belongs to the protein kinase superfamily. Ser/Thr protein kinase family. Post-translationally, autophosphorylated. In terms of tissue distribution, expressed in nodes, vascular bundles of stems, and anthers.

Its subcellular location is the cell membrane. The enzyme catalyses L-seryl-[protein] + ATP = O-phospho-L-seryl-[protein] + ADP + H(+). The catalysed reaction is L-threonyl-[protein] + ATP = O-phospho-L-threonyl-[protein] + ADP + H(+). Receptor kinase involved in salt drought stress responses. Acts as a positive regulator of salt and drought tolerance. May promote salt and drought tolerance through the induction of the activities of antioxidative enzymes, such as peroxidase, superoxide dismutase and catalase. May be involved in the control of stomatal development in leaf epidermis. Possesses kinase activity in vitro. Does not seem to be involved in heat tolerance. This Oryza sativa subsp. japonica (Rice) protein is LRR receptor-like serine/threonine-protein kinase SIK1.